The sequence spans 109 residues: Membrane-bound lysozyme inhibitor of C-type lysozyme (109 aa).

The first 17 residues, 1 to 17, serve as a signal peptide directing secretion; sequence MTMKKLLIIILPVLLSG. Cys18 is lipidated: N-palmitoyl cysteine. Cys18 carries the S-diacylglycerol cysteine lipid modification. A disulfide bridge links Cys37 with Cys102.

This sequence belongs to the MliC family. Type 1 subfamily. Monomer.

It localises to the cell outer membrane. Functionally, specifically inhibits C-type lysozymes. This is Membrane-bound lysozyme inhibitor of C-type lysozyme from Escherichia coli (strain K12).